The primary structure comprises 86 residues: Mu-theraphotoxin-Cg2a 1 (86 aa).

A signal peptide spans 1 to 21; sequence MKVSVVITLAVLGIMFVWASA. The propeptide occupies 22 to 50; that stretch reads AELEERGSDQRDSPAWLKSMERIFQSEER. Cystine bridges form between cysteine 52-cysteine 66, cysteine 59-cysteine 71, and cysteine 65-cysteine 78. The residue at position 84 (phenylalanine 84) is a Phenylalanine amide.

This sequence belongs to the neurotoxin 10 (Hwtx-1) family. 37 (Jztx-31) subfamily. In terms of tissue distribution, expressed by the venom gland.

Its subcellular location is the secreted. Functionally, inhibits both peak current and fast inactivation of voltage-gated sodium channels (Nav) channels. Inhibits the inactivation of Nav on DRG neurons (EC(50)=1.77 uM) and peak current of cardiac myocytes (IC(50)=0.90 uM). This is Mu-theraphotoxin-Cg2a 1 from Chilobrachys guangxiensis (Chinese earth tiger tarantula).